Consider the following 242-residue polypeptide: Octanoyltransferase (242 aa).

The BPL/LPL catalytic domain occupies 31 to 206; it reads SQTTDEIWFL…LFLKNFGYNQ (176 aa). Residues 70-77, 137-139, and 150-152 each bind substrate; these read RGGQVTYH, SIG, and GLA. C168 functions as the Acyl-thioester intermediate in the catalytic mechanism.

Belongs to the LipB family.

The protein localises to the cytoplasm. The enzyme catalyses octanoyl-[ACP] + L-lysyl-[protein] = N(6)-octanoyl-L-lysyl-[protein] + holo-[ACP] + H(+). Its pathway is protein modification; protein lipoylation via endogenous pathway; protein N(6)-(lipoyl)lysine from octanoyl-[acyl-carrier-protein]: step 1/2. Catalyzes the transfer of endogenously produced octanoic acid from octanoyl-acyl-carrier-protein onto the lipoyl domains of lipoate-dependent enzymes. Lipoyl-ACP can also act as a substrate although octanoyl-ACP is likely to be the physiological substrate. The chain is Octanoyltransferase from Coxiella burnetii (strain RSA 493 / Nine Mile phase I).